The chain runs to 179 residues: Large ribosomal subunit protein uL6 (179 aa).

It belongs to the universal ribosomal protein uL6 family. As to quaternary structure, part of the 50S ribosomal subunit.

This protein binds to the 23S rRNA, and is important in its secondary structure. It is located near the subunit interface in the base of the L7/L12 stalk, and near the tRNA binding site of the peptidyltransferase center. The polypeptide is Large ribosomal subunit protein uL6 (Herpetosiphon aurantiacus (strain ATCC 23779 / DSM 785 / 114-95)).